An 853-amino-acid chain; its full sequence is Leucine--tRNA ligase (853 aa).

Residues 40–50 carry the 'HIGH' region motif; it reads PYPSGKMHMGH. Positions 609-613 match the 'KMSKS' region motif; the sequence is KMSKS. K612 is an ATP binding site.

It belongs to the class-I aminoacyl-tRNA synthetase family.

Its subcellular location is the cytoplasm. The catalysed reaction is tRNA(Leu) + L-leucine + ATP = L-leucyl-tRNA(Leu) + AMP + diphosphate. The protein is Leucine--tRNA ligase of Brachyspira hyodysenteriae (strain ATCC 49526 / WA1).